Here is a 125-residue protein sequence, read N- to C-terminus: Probable growth factor FPV211 (125 aa).

The signal sequence occupies residues 1 to 48 (MKEPLIEVKREYNLIKTLTGKKFVVSTSIVVVLLIINMIFYGIRIHEL). Positions 80–120 (LFEKCKSKFNNFCIYGECMNIINLDKKFCICNKGYTGNRCD) constitute an EGF-like domain. 3 cysteine pairs are disulfide-bonded: Cys84/Cys97, Cys92/Cys108, and Cys110/Cys119.

The protein localises to the secreted. This chain is Probable growth factor FPV211, found in Vertebrata (FPV).